A 207-amino-acid chain; its full sequence is Protein FMP32, mitochondrial (207 aa).

Residues 100 to 136 (ADRSEFHNIQNEYESVKNDLEKLRNKLREEITKTNAG) are a coiled coil. The chain crosses the membrane as a helical span at residues 184 to 206 (VMQWLIGVCTGTFALVLAYMRLL).

This sequence belongs to the CCDC90 family.

Its subcellular location is the mitochondrion. The protein localises to the membrane. This is Protein FMP32, mitochondrial (FMP32) from Saccharomyces cerevisiae (strain ATCC 204508 / S288c) (Baker's yeast).